We begin with the raw amino-acid sequence, 148 residues long: 3-dehydroquinate dehydratase (148 aa).

Catalysis depends on Tyr-23, which acts as the Proton acceptor. Positions 75, 81, and 88 each coordinate substrate. His-101 (proton donor) is an active-site residue. Substrate is bound by residues 102-103 (LS) and Arg-112.

Belongs to the type-II 3-dehydroquinase family. As to quaternary structure, homododecamer.

It carries out the reaction 3-dehydroquinate = 3-dehydroshikimate + H2O. It functions in the pathway metabolic intermediate biosynthesis; chorismate biosynthesis; chorismate from D-erythrose 4-phosphate and phosphoenolpyruvate: step 3/7. In terms of biological role, catalyzes a trans-dehydration via an enolate intermediate. The polypeptide is 3-dehydroquinate dehydratase (Xylella fastidiosa (strain M23)).